Here is a 135-residue protein sequence, read N- to C-terminus: ATP synthase epsilon chain (135 aa).

Belongs to the ATPase epsilon chain family. As to quaternary structure, F-type ATPases have 2 components, CF(1) - the catalytic core - and CF(0) - the membrane proton channel. CF(1) has five subunits: alpha(3), beta(3), gamma(1), delta(1), epsilon(1). CF(0) has three main subunits: a, b and c.

Its subcellular location is the cell inner membrane. In terms of biological role, produces ATP from ADP in the presence of a proton gradient across the membrane. The sequence is that of ATP synthase epsilon chain from Bradyrhizobium sp. (strain ORS 278).